The primary structure comprises 261 residues: MVDSLATVWLIGGTVDSRAVAEGLIAQGINCLVTVTTSEAKHLYPIHQCLTVHVGALTPQEIPKFLKRHSIAVIVDASHPFAAQITTTVTAIAKEQQIPYIRFERPPLALGKNTLEVPDIQSLTRGKYQPYLRGKRVLLTVGARWLSHFSLLQDEAVLFARILPYPQALAQAIAAGFTSDRIIALRPPVAEPLEKALWQQWQIQGVVTKASGAQGGELVKQKVAEALGVNLIRIARPQTIPGQITDDLSQINQFCQRHLPS.

The protein belongs to the precorrin-6x reductase family.

The enzyme catalyses Co-precorrin-6B + NAD(+) = Co-precorrin-6A + NADH + H(+). It functions in the pathway cofactor biosynthesis; adenosylcobalamin biosynthesis; cob(II)yrinate a,c-diamide from sirohydrochlorin (anaerobic route): step 7/10. Its function is as follows. Catalyzes the reduction of the macrocycle of cobalt-precorrin-6A to cobalt-precorrin-6B. In Synechocystis sp. (strain ATCC 27184 / PCC 6803 / Kazusa), this protein is Cobalt-precorrin-6A reductase (cbiJ).